A 927-amino-acid polypeptide reads, in one-letter code: MPVRKQDTQRALHLLEEYRSKLSQTEDRQLRSSIERVINIFQSNLFQALIDIQEFYEVTLLDNPKCIDRSKQSEPIQPVNTWEISSLPSTTVTSETLPSSLSPSVEKYRYQDEDTPPQEHISPQITNEVIGPELVHVSEKNLSEIENVHGFVSHSHISPIKPTEAVPPSSPTVPVIPVLPVPAENTVILPTIPQANPPPVLVNTDSLETSTYVNGTDADYEYEEITLERGNSGLGFSIAGGTDNPHIGDDSSIFITKIIAGGAAAQDGRLRVNDCILRVNEVDVRDVTHSKAVEALKEAGSIVRLYVKRRKPVSEKIMEIKLIKGPKGLGFSIAGGVGNQHIPGDNSIYVTKIIEGGAAHKDGKLQIGDKLLAVNSVCLEEVTHEEAVTALKNTSDFVYLKVAKPTSMYMNDGYAPPDITNSSSQPVDNHVSPSSYLGHTPASPARYSPVSKAMLGDDEITREPRKVVLHRGSTGLGFNIVGGEDGEGIFISFILAGGPADLSGELRKGDRIISVNSVDLRTASHEQAAAALKNAGQAVTIVAQYRPEEYSRFEAKIHDLREQMMNSSISSGSGSLRTSQKRSLYVRALFDYDKTKDSGLPSQGLNFKFGDILHVINASDDEWWQARQVTPDGESDEVGVIPSKRRVEKKERARLKTVKFNSKTRGDKGQSFNDKRKKNLFSRKFPFYKNKDQSEQETSDADQHITSNASDSESSYRGQEEYVLSYEPVNQQEVNYTRPVIILGPMKDRINDDLISEFPDKFGSCVPHTTRPKRDYEVDGRDYHFVTSREQMEKDIQEHKFIEAGQYNNHLYGTSVQSVREVAEKGKHCILDVSGNAIKRLQIAQLYPISIFIKPKSMENIMEMNKRLTEEQARKTFERAMKLEQEFTEHFTAIVQGDTLEDIYNQVKQIIEEQSGPYIWVPAKEKL.

The region spanning 4 to 64 (RKQDTQRALH…FYEVTLLDNP (61 aa)) is the L27 domain. A Phosphothreonine modification is found at threonine 115. A phosphoserine mark is found at serine 122, serine 138, and serine 158. Positions 162 to 212 (PTEAVPPSSPTVPVIPVLPVPAENTVILPTIPQANPPPVLVNTDSLETSTY) are interaction with SH3 domains. The required for interaction with MARCHF2 stretch occupies residues 224-546 (EITLERGNSG…QAVTIVAQYR (323 aa)). 3 consecutive PDZ domains span residues 230 to 317 (GNSG…SEKI), 325 to 412 (GPKG…YMND), and 474 to 555 (TGLG…RFEA). Serine 232 carries the phosphoserine modification. Tyrosine 399 carries the phosphotyrosine modification. A phosphoserine mark is found at serine 568, serine 573, serine 575, serine 579, serine 598, serine 619, serine 707, serine 710, and serine 857. The SH3 domain maps to 581–651 (KRSLYVRALF…PSKRRVEKKE (71 aa)). The region spanning 683–858 (RKFPFYKNKD…ISIFIKPKSM (176 aa)) is the Guanylate kinase-like domain. The interval 691-719 (KDQSEQETSDADQHITSNASDSESSYRGQ) is disordered. The segment covering 704–717 (HITSNASDSESSYR) has biased composition (polar residues).

It belongs to the MAGUK family. As to quaternary structure, homotetramer. Interacts (via guanylate kinase-like domain) with DLGAP1, DLGAP2, DLGAP3, DLGAP4 and MAP1A. Interacts (via guanylate kinase-like domain) with KIF13B. May interact with HTR2A. Interacts (via PDZ domains) with GRIA1. Interacts (via PDZ domains) with GRIN2A. Interacts (via PDZ domains) with KCND2 and KCND3. Interacts (via PDZ domains) with KCNA1, KCNA2, KCNA3 and KCNA4. Interacts (via PDZ domains) with ADGRA3. Interacts with KCNF1. Interacts with CAMK2. Interacts with cytoskeleton-associated protein EPB41. Interacts with cytoskeleton-associated protein EZR. Found in a complex with KCNA5 and CAV3. Found in a complex with APC and CTNNB1. Interacts (via PDZ domains) with APC. Interacts with CDH1 through binding to PIK3R1. Forms multiprotein complexes with CASK, LIN7A, LIN7B, LIN7C, APBA1, and KCNJ12. Interacts with TOPK. Forms a tripartite complex composed of DLG1, MPP7 and LIN7 (LIN7A or LIN7C). May interact with TJAP1. Interacts with PTEN. Interacts with FRMPD4 (via C-terminus). Interacts with LRFN1, LRFN2 and LRFN4. Interacts with SFPQ. Interacts (via PDZ domains) with ADGRA2 (via PDZ-binding motif). Interacts with ADAM10; this interaction recruits ADAM10 to the cell membrane during long-term depression in hippocampal neurons. Interacts with DGKI (via PDZ-binding motif). Interacts (via PDZ domains) with MARCHF2 (via PDZ domain); the interaction leads to DLG1 ubiqtuitination and degradation. Interacts (via N-terminus) with MPP3; this interaction connects CADM1 with DLG1 and links CADM1 with the regulatory subunit of phosphoinositide-3-kinase (PI3K) by forming a multiprotein complex and participates in cell spreading. Post-translationally, phosphorylated by MAPK12. Phosphorylation of Ser-232 regulates association with GRIN2A. In terms of processing, ubiquitinated; by MARCHF2 which results in its degradation.

It localises to the cell membrane. Its subcellular location is the basolateral cell membrane. The protein localises to the endoplasmic reticulum membrane. It is found in the postsynaptic density. The protein resides in the synapse. It localises to the sarcolemma. Its subcellular location is the apical cell membrane. The protein localises to the cell junction. It is found in the cytoplasm. In terms of biological role, essential multidomain scaffolding protein required for normal development. Recruits channels, receptors and signaling molecules to discrete plasma membrane domains in polarized cells. Promotes epithelial cell layer barrier function via maintaining cell-cell adhesion. May also play a role in adherens junction assembly, signal transduction, cell proliferation, synaptogenesis and lymphocyte activation. Regulates the excitability of cardiac myocytes by modulating the functional expression of Kv4 channels. Functional regulator of Kv1.5 channel. During long-term depression in hippocampal neurons, it recruits ADAM10 to the plasma membrane. The chain is Disks large homolog 1 (DLG1) from Canis lupus familiaris (Dog).